Here is a 283-residue protein sequence, read N- to C-terminus: Tumor necrosis factor receptor superfamily member 14 (283 aa).

Positions 1–38 are cleaved as a signal peptide; that stretch reads MEPPGDWGPPPWRSTPKTDVLRLVLYLTFLGAPCYAPA. At 39 to 202 the chain is on the extracellular side; sequence LPSCKEDEYP…GAGTSSSHWV (164 aa). Cystine bridges form between Cys42–Cys53, Cys54–Cys67, Cys57–Cys75, Cys78–Cys93, Cys96–Cys111, Cys99–Cys119, Cys121–Cys138, and Cys127–Cys135. 3 TNFR-Cys repeats span residues 42 to 75, 78 to 119, and 121 to 162; these read CKED…GTVC, CPPG…NAVC, and CSPG…DTLC. Asn110 carries N-linked (GlcNAc...) asparagine glycosylation. A glycan (N-linked (GlcNAc...) asparagine) is linked at Asn173. A helical membrane pass occupies residues 203-223; that stretch reads WWFLSGSLVIVIVCSTVGLII. Residues 224 to 283 lie on the Cytoplasmic side of the membrane; it reads CVKRRKPRGDVVKVIVSVQRKRQEAEGEATVIEALQAPPDVTTVAVEETIPSFTGRSPNH. Residue Ser240 is modified to Phosphoserine.

The protein belongs to the tumor necrosis factor receptor superfamily. In terms of assembly, interacts with TRAF2, TRAF3 and TRAF5. Interacts (via CRD1/TNFR-Cys 1) with CD160; this interaction is direct. Interacts with LTA and TNFSF14. Interacts (via CRD1/TNFR-Cys 1) in cis and trans with BTLA; the cis interactions inhibits the trans interactions. (Microbial infection) Interacts with herpes simplex virus 1/HHV-1 envelope glycoprotein D. As to quaternary structure, (Microbial infection) Interacts with herpes simplex virus 2/HHV-2 envelope glycoprotein D. Post-translationally, N-glycosylated. As to expression, widely expressed, with the highest expression in lung, spleen and thymus. Expressed in a subpopulation of B cells and monocytes. Expressed in naive T cells.

It localises to the cell membrane. In terms of biological role, receptor for four distinct ligands: The TNF superfamily members TNFSF14/LIGHT and homotrimeric LTA/lymphotoxin-alpha and the immunoglobulin superfamily members BTLA and CD160, altogether defining a complex stimulatory and inhibitory signaling network. Signals via the TRAF2-TRAF3 E3 ligase pathway to promote immune cell survival and differentiation. Participates in bidirectional cell-cell contact signaling between antigen presenting cells and lymphocytes. In response to ligation of TNFSF14/LIGHT, delivers costimulatory signals to T cells, promoting cell proliferation and effector functions. Interacts with CD160 on NK cells, enhancing IFNG production and anti-tumor immune response. In the context of bacterial infection, acts as a signaling receptor on epithelial cells for CD160 from intraepithelial lymphocytes, triggering the production of antimicrobial proteins and pro-inflammatory cytokines. Upon binding to CD160 on activated CD4+ T cells, down-regulates CD28 costimulatory signaling, restricting memory and alloantigen-specific immune response. May interact in cis (on the same cell) or in trans (on other cells) with BTLA. In cis interactions, appears to play an immune regulatory role inhibiting in trans interactions in naive T cells to maintain a resting state. In trans interactions, can predominate during adaptive immune response to provide survival signals to effector T cells. (Microbial infection) Acts as a receptor for Herpes simplex virus 1/HHV-1. Its function is as follows. (Microbial infection) Acts as a receptor for Herpes simplex virus 2/HHV-2. The chain is Tumor necrosis factor receptor superfamily member 14 from Homo sapiens (Human).